Reading from the N-terminus, the 360-residue chain is uncharacterized protein (360 aa).

Residues 11 to 40 (KEEVWDTNRCSGCGACVAVCPVNNLYFREE) form the 4Fe-4S ferredoxin-type domain.

It belongs to the FrhB family.

This is an uncharacterized protein from Methanocaldococcus jannaschii (strain ATCC 43067 / DSM 2661 / JAL-1 / JCM 10045 / NBRC 100440) (Methanococcus jannaschii).